The sequence spans 289 residues: D-alanine aminotransferase (289 aa).

Tyr31 is a binding site for substrate. A pyridoxal 5'-phosphate-binding site is contributed by Arg50. 2 residues coordinate substrate: Arg99 and His101. The Proton acceptor role is filled by Lys147. Lys147 is modified (N6-(pyridoxal phosphate)lysine). Glu179 provides a ligand contact to pyridoxal 5'-phosphate.

It belongs to the class-IV pyridoxal-phosphate-dependent aminotransferase family. Homodimer. Pyridoxal 5'-phosphate is required as a cofactor.

It catalyses the reaction D-alanine + 2-oxoglutarate = D-glutamate + pyruvate. In terms of biological role, acts on the D-isomers of alanine, leucine, aspartate, glutamate, aminobutyrate, norvaline and asparagine. The enzyme transfers an amino group from a substrate D-amino acid to the pyridoxal phosphate cofactor to form pyridoxamine and an alpha-keto acid in the first half-reaction. The second half-reaction is the reverse of the first, transferring the amino group from the pyridoxamine to a second alpha-keto acid to form the product D-amino acid via a ping-pong mechanism. This is an important process in the formation of D-alanine and D-glutamate, which are essential bacterial cell wall components. This Listeria monocytogenes serotype 4b (strain F2365) protein is D-alanine aminotransferase (dat).